A 569-amino-acid polypeptide reads, in one-letter code: Sulfite reductase [NADPH] hemoprotein beta-component (569 aa).

[4Fe-4S] cluster-binding residues include C433, C439, C478, and C482. Position 482 (C482) interacts with siroheme.

This sequence belongs to the nitrite and sulfite reductase 4Fe-4S domain family. As to quaternary structure, alpha(8)-beta(8). The alpha component is a flavoprotein, the beta component is a hemoprotein. The cofactor is siroheme. [4Fe-4S] cluster is required as a cofactor.

It catalyses the reaction hydrogen sulfide + 3 NADP(+) + 3 H2O = sulfite + 3 NADPH + 4 H(+). It participates in sulfur metabolism; hydrogen sulfide biosynthesis; hydrogen sulfide from sulfite (NADPH route): step 1/1. In terms of biological role, component of the sulfite reductase complex that catalyzes the 6-electron reduction of sulfite to sulfide. This is one of several activities required for the biosynthesis of L-cysteine from sulfate. This is Sulfite reductase [NADPH] hemoprotein beta-component from Buchnera aphidicola subsp. Acyrthosiphon pisum (strain Tuc7).